The sequence spans 240 residues: Uridylate kinase (240 aa).

14–17 (KLSG) contacts ATP. A UMP-binding site is contributed by glycine 56. The ATP site is built by glycine 57 and arginine 61. UMP is bound by residues aspartate 76 and 137–144 (TGNPFFTT). ATP-binding residues include threonine 164, tyrosine 170, and aspartate 173.

It belongs to the UMP kinase family. As to quaternary structure, homohexamer.

The protein resides in the cytoplasm. It catalyses the reaction UMP + ATP = UDP + ADP. It functions in the pathway pyrimidine metabolism; CTP biosynthesis via de novo pathway; UDP from UMP (UMPK route): step 1/1. Inhibited by UTP. Catalyzes the reversible phosphorylation of UMP to UDP. In Acidovorax sp. (strain JS42), this protein is Uridylate kinase.